A 259-amino-acid chain; its full sequence is Ribosomal RNA small subunit methyltransferase J (259 aa).

S-adenosyl-L-methionine contacts are provided by residues 101–102, 117–118, 153–154, and aspartate 176; these read RD, ER, and SS.

Belongs to the methyltransferase superfamily. RsmJ family.

It is found in the cytoplasm. The enzyme catalyses guanosine(1516) in 16S rRNA + S-adenosyl-L-methionine = N(2)-methylguanosine(1516) in 16S rRNA + S-adenosyl-L-homocysteine + H(+). In terms of biological role, specifically methylates the guanosine in position 1516 of 16S rRNA. The sequence is that of Ribosomal RNA small subunit methyltransferase J from Vibrio vulnificus (strain YJ016).